A 53-amino-acid polypeptide reads, in one-letter code: Metallocarboxypeptidase inhibitor (53 aa).

Disulfide bonds link Cys-9/Cys-23, Cys-15/Cys-51, and Cys-27/Cys-38. Ala-53 lines the Zn(2+) pocket.

Monomer. Interacts (via C-terminus) with human CPA4.

Its function is as follows. Metallocarboxypeptidase inhibitor. Has an inhibitory effect on bovine CPA1 and CPB2, human CPA1, CPA2, CPA4, CPB1 and CPB2, and porcine CPB1. Does not inhibit D.melanogaster svr (carboxypeptidase D). Shows no activity against serine proteases subtilisin or bovine trypsin, cysteine protease papain, and aspartyl protease porcine pepsin. The sequence is that of Metallocarboxypeptidase inhibitor from Nerita versicolor (Four-tooth nerite).